Reading from the N-terminus, the 347-residue chain is N-acetyl-gamma-glutamyl-phosphate reductase (347 aa).

Residue Cys-152 is part of the active site.

The protein belongs to the NAGSA dehydrogenase family. Type 1 subfamily.

The protein resides in the cytoplasm. The enzyme catalyses N-acetyl-L-glutamate 5-semialdehyde + phosphate + NADP(+) = N-acetyl-L-glutamyl 5-phosphate + NADPH + H(+). It functions in the pathway amino-acid biosynthesis; L-arginine biosynthesis; N(2)-acetyl-L-ornithine from L-glutamate: step 3/4. In terms of biological role, catalyzes the NADPH-dependent reduction of N-acetyl-5-glutamyl phosphate to yield N-acetyl-L-glutamate 5-semialdehyde. The protein is N-acetyl-gamma-glutamyl-phosphate reductase of Neisseria gonorrhoeae (strain NCCP11945).